A 170-amino-acid chain; its full sequence is Probable inactive uracil-DNA glycosylase, mitochondrial (170 aa).

The transit peptide at Met1–Val53 directs the protein to the mitochondrion.

This sequence belongs to the uracil-DNA glycosylase (UDG) superfamily. UNG family.

The protein localises to the mitochondrion. Its function is as follows. Probable inactive paralog of AtUNG (AC Q9LIH6) generated by a gene duplication event and subsequently disrupted by at least two transposon insertions. The protein is Probable inactive uracil-DNA glycosylase, mitochondrial of Arabidopsis thaliana (Mouse-ear cress).